Here is a 378-residue protein sequence, read N- to C-terminus: Protein RecA (378 aa).

Residue 79 to 86 coordinates ATP; it reads GPESSGKT.

Belongs to the RecA family.

Its subcellular location is the cytoplasm. Can catalyze the hydrolysis of ATP in the presence of single-stranded DNA, the ATP-dependent uptake of single-stranded DNA by duplex DNA, and the ATP-dependent hybridization of homologous single-stranded DNAs. It interacts with LexA causing its activation and leading to its autocatalytic cleavage. This Streptococcus equi subsp. zooepidemicus (strain MGCS10565) protein is Protein RecA.